We begin with the raw amino-acid sequence, 607 residues long: ATP-dependent RNA helicase-like protein DB10 (607 aa).

The segment covering 1–10 has biased composition (polar residues); it reads MAVVTASSAG. Disordered regions lie at residues 1–25 and 66–108; these read MAVV…KPWK and VFVS…DGTS. The WW domain occupies 18-52; it reads PTLPKPWKGLVDGTTGFIYFWNPETNDTQYERPVP. The span at 89 to 98 shows a compositional bias: polar residues; the sequence is RGSNNKIARS. Residues 99–108 show a composition bias toward basic and acidic residues; that stretch reads SSDRFHDGTS. The Q motif signature appears at 145–173; it reads TSFEATGFPSEIVREMHQAGFSAPTPIQA. One can recognise a Helicase ATP-binding domain in the interval 176 to 350; that stretch reads WPIALQGRDI…ADLLVNSVQV (175 aa). 189–196 serves as a coordination point for ATP; sequence AKTGSGKT. Positions 298 to 301 match the DEAD box motif; sequence DEAD. The Helicase C-terminal domain occupies 379–523; that stretch reads RVEQILRSKE…CVPTELRDMA (145 aa). Residues 519–607 are disordered; it reads LRDMASRGGG…WSGKKSRFTD (89 aa). Over residues 538–548 the composition is skewed to gly residues; that stretch reads SGPGGRGGRGG. Residues 562 to 574 are compositionally biased toward basic and acidic residues; sequence GYDRGSRDSDRYG.

Belongs to the DEAD box helicase family.

The enzyme catalyses ATP + H2O = ADP + phosphate + H(+). This Nicotiana sylvestris (Wood tobacco) protein is ATP-dependent RNA helicase-like protein DB10.